A 382-amino-acid chain; its full sequence is Dual-specificity RNA methyltransferase RlmN (382 aa).

Catalysis depends on glutamate 95, which acts as the Proton acceptor. In terms of domain architecture, Radical SAM core spans 101-348 (EDDRGTLCIS…TTVRKTRGDD (248 aa)). Cysteine 108 and cysteine 353 are joined by a disulfide. [4Fe-4S] cluster-binding residues include cysteine 115, cysteine 119, and cysteine 122. S-adenosyl-L-methionine-binding positions include 179 to 180 (GE), serine 211, 233 to 235 (SLH), and asparagine 310. Cysteine 353 functions as the S-methylcysteine intermediate in the catalytic mechanism.

Belongs to the radical SAM superfamily. RlmN family. Requires [4Fe-4S] cluster as cofactor.

The protein resides in the cytoplasm. The enzyme catalyses adenosine(2503) in 23S rRNA + 2 reduced [2Fe-2S]-[ferredoxin] + 2 S-adenosyl-L-methionine = 2-methyladenosine(2503) in 23S rRNA + 5'-deoxyadenosine + L-methionine + 2 oxidized [2Fe-2S]-[ferredoxin] + S-adenosyl-L-homocysteine. It catalyses the reaction adenosine(37) in tRNA + 2 reduced [2Fe-2S]-[ferredoxin] + 2 S-adenosyl-L-methionine = 2-methyladenosine(37) in tRNA + 5'-deoxyadenosine + L-methionine + 2 oxidized [2Fe-2S]-[ferredoxin] + S-adenosyl-L-homocysteine. Functionally, specifically methylates position 2 of adenine 2503 in 23S rRNA and position 2 of adenine 37 in tRNAs. m2A2503 modification seems to play a crucial role in the proofreading step occurring at the peptidyl transferase center and thus would serve to optimize ribosomal fidelity. In Bordetella pertussis (strain Tohama I / ATCC BAA-589 / NCTC 13251), this protein is Dual-specificity RNA methyltransferase RlmN.